The chain runs to 510 residues: Outer spore wall protein 7 (510 aa).

Positions 1 to 23 are cleaved as a signal peptide; it reads MKAVFKVTTALLACVFIARYLVC. A disordered region spans residues 167-195; the sequence is FETDSETEDYEDDENENEDEDEDEDEDDV. Residues 169 to 195 show a composition bias toward acidic residues; the sequence is TDSETEDYEDDENENEDEDEDEDEDDV. Tyrosine 354 carries the phosphotyrosine modification.

Belongs to the OSW/SHE family.

Involved in spore wall assembly. This is Outer spore wall protein 7 from Saccharomyces cerevisiae (strain ATCC 204508 / S288c) (Baker's yeast).